The chain runs to 218 residues: MKTYLSIYYLIQFCGHSWIFTNMTTRFLFFGQDAFADTFYSIGLVMQGCQLLSILELAHILLGVEQNGFLPMFLQVAERFIILFVVITSQEEVQSKYIVCALFFIWNLWDVIRYPYDMLAAVDTDYSALTWLRHTWWIVAYPLSVLAEAYTIYESLPYFESLGTYSFKMALPVSLSFHFPYILTLYLVLQPVGMLYICSCLWSERKQYFQRKLKLKKN.

Over 1 to 6 (MKTYLS) the chain is Cytoplasmic. Residues 7 to 29 (IYYLIQFCGHSWIFTNMTTRFLF) traverse the membrane as a helical segment. Over 30-38 (FGQDAFADT) the chain is Lumenal. Residues 39–61 (FYSIGLVMQGCQLLSILELAHIL) form a helical membrane-spanning segment. At 62–67 (LGVEQN) the chain is on the cytoplasmic side. A helical transmembrane segment spans residues 68-87 (GFLPMFLQVAERFIILFVVI). The Lumenal portion of the chain corresponds to 88–96 (TSQEEVQSK). A helical membrane pass occupies residues 97 to 116 (YIVCALFFIWNLWDVIRYPY). Topologically, residues 117-136 (DMLAAVDTDYSALTWLRHTW) are cytoplasmic. Residues 137-159 (WIVAYPLSVLAEAYTIYESLPYF) form a helical membrane-spanning segment. Active-site residues include Tyr141 and Glu148. At 160-178 (ESLGTYSFKMALPVSLSFH) the chain is on the lumenal side. A helical transmembrane segment spans residues 179–201 (FPYILTLYLVLQPVGMLYICSCL). At 202–218 (WSERKQYFQRKLKLKKN) the chain is on the cytoplasmic side.

The protein belongs to the very long-chain fatty acids dehydratase HACD family.

The protein localises to the endoplasmic reticulum membrane. The enzyme catalyses a very-long-chain (3R)-3-hydroxyacyl-CoA = a very-long-chain (2E)-enoyl-CoA + H2O. It carries out the reaction (3R)-hydroxyhexadecanoyl-CoA = (2E)-hexadecenoyl-CoA + H2O. It participates in lipid metabolism; fatty acid biosynthesis. Functionally, catalyzes the third of the four reactions of the long-chain fatty acids elongation cycle. This endoplasmic reticulum-bound enzymatic process, allows the addition of two carbons to the chain of long- and very long-chain fatty acids/VLCFAs per cycle. This enzyme catalyzes the dehydration of the 3-hydroxyacyl-CoA intermediate into trans-2,3-enoyl-CoA, within each cycle of fatty acid elongation. Thereby, it participates in the production of VLCFAs of different chain lengths that are involved in multiple biological processes as precursors of membrane lipids and lipid mediators. The sequence is that of Very-long-chain (3R)-3-hydroxyacyl-CoA dehydratase from Xenopus laevis (African clawed frog).